The sequence spans 2628 residues: Protein FMP27, mitochondrial (2628 aa).

The N-terminal stretch at Met-1–Arg-28 is a signal peptide. The interval Lys-29–Met-192 is transmembrane domain. LRR repeat units lie at residues Phe-160–Val-182, Pro-213–Gln-236, Ile-271–Glu-296, Tyr-306–Glu-333, Asn-571–Asn-596, Val-835–His-857, Phe-1944–Phe-1967, Phe-2101–Lys-2125, and Ile-2303–Lys-2327.

The protein resides in the cell membrane. Its subcellular location is the endoplasmic reticulum membrane. The protein localises to the mitochondrion membrane. Tube-forming lipid transport protein which binds to phosphatidylinositols and affects phosphatidylinositol-4,5-bisphosphate (PtdIns-4,5-P2) distribution. This is Protein FMP27, mitochondrial from Saccharomyces cerevisiae (strain ATCC 204508 / S288c) (Baker's yeast).